The chain runs to 620 residues: MENENKPNVANFEAAVAVKDYEKACSELLLILSQLDSNFGGIQEIEFEYPVQLQDLEQEKIVYFCTRMATAITTLFSDPVLEISDLGVQRFLVYQRWLALIFASSPFVNADHILQTYNREPNRKNSLEIHLDSSKSSLIKFCILYLPESNVNLNLDVMWNISPELCASLCFALQSPRFIGTSTAFNKRATILQWFPRHLDQLKNLNNIPSAISHDVYMHCSYDTSVNKHDVKRALNHVIRRHIESEYGWKDRYVAHIGYRNNKPVMVVLLEHFHSAHSIYRTHSTSMIAAREHFYLIGLGSPSVDQAGQEVFDEFHLVAGDNMKQKLEFIRSVCESNGAAIFYMPSIGMDMTTIFASNTRLAPIQAIALGHPATTHSDFIEYVIVEDDYVGSEACFSETLLRLPKDALPYVPSALAPEKVDYLLRENPEVVNIGIASTTMKLNPYFLEALKAIRDRAKVKVHFHFALGQSNGITHPYVERFIKSYLGDSATAHPHSPYHQYLRILHNCDMMVNPFPFGNTNGIIDMVTLGLVGVCKTGAEVHEHIDEGLFKRLGLPEWLIANTVDEYVERAVRLAENHQERLELRRYIIENNGLNTLFTGDPRPMGQVFLEKLNAFLKEN.

The protein belongs to the glycosyltransferase 41 family. Does not require a metal cofactor. serves as cofactor.

It is found in the cytoplasm. It carries out the reaction L-asparaginyl-[protein] + UDP-alpha-D-glucose = N(4)-(beta-D-glucosyl)-L-asparaginyl-[protein] + UDP + H(+). The protein operates within protein modification; protein glycosylation. Its function is as follows. Inverting glycosyltransferase that catalyzes the transfer of one glucose moiety from UDP-glucose to an asparagine residue in peptides and proteins containing the NX(S/T) motif, resulting in their modification with a beta-linked 1,N-glucose. Likely acts as a key component of a general protein glycosylation system. Also accepts UDP-galactose as a substrate donor, albeit with low efficiency. Cannot use UDP-GlcNAc or UDP-GalNAc as substrate donor. This Actinobacillus pleuropneumoniae serotype 7 (strain AP76) protein is UDP-glucose:protein N-beta-glucosyltransferase.